Here is a 361-residue protein sequence, read N- to C-terminus: 45 kDa calcium-binding protein (361 aa).

Residues 1–35 (MVWLVAMTPRQSSLCGLAAHGLWFLGLVLLMDATA) form the signal peptide. Asparagine 39 carries an N-linked (GlcNAc...) asparagine glycan. EF-hand domains are found at residues 97–132 (RSRRKLMVIFSKVDVNTDRRISAKEMQHWIMEKTAE) and 136–171 (EAVKENKLHFRAVDPDGDGHVSWDEYKVKFLASKGH). Phosphoserine is present on serine 98. Residues aspartate 110, asparagine 112, aspartate 114, arginine 116, glutamate 121, aspartate 149, aspartate 151, aspartate 153, histidine 155, and glutamate 160 each coordinate Ca(2+). The residue at position 192 (threonine 192) is a Phosphothreonine. EF-hand domains lie at 196–231 (LGNLRDRWYQADNPPADLLLTEDEFLSFLHPEHSRG), 232–267 (MLKFMVKEIFRDLDQDGDKQLSLPEFISLPVGTVEN), 277–312 (WVKDRKKEFEELIDSNHDGIVTMEELENYMDPMNEY), and 313–348 (NALNEAKQMIAIADENQNHHLEPEEILKYSEFFTGS). Aspartate 212 is a binding site for Ca(2+). Threonine 216 carries the phosphothreonine modification. Glutamate 219, aspartate 245, aspartate 247, aspartate 249, glutamine 251, and glutamate 256 together coordinate Ca(2+). Threonine 264 carries the post-translational modification Phosphothreonine. Ca(2+)-binding residues include aspartate 290, asparagine 292, and aspartate 294. Threonine 298 is subject to Phosphothreonine. Ca(2+) is bound by residues glutamate 301, aspartate 326, asparagine 328, asparagine 330, histidine 332, and glutamate 337. Positions 308-361 (PMNEYNALNEAKQMIAIADENQNHHLEPEEILKYSEFFTGSKLMDYARNVHEEF) are necessary for intracellular retention in Golgi apparatus lumen.

Belongs to the CREC family. As to expression, ubiquitous.

Its subcellular location is the golgi apparatus lumen. May regulate calcium-dependent activities in the endoplasmic reticulum lumen or post-ER compartment. This chain is 45 kDa calcium-binding protein (Sdf4), found in Mus musculus (Mouse).